Reading from the N-terminus, the 874-residue chain is Alanine--tRNA ligase (874 aa).

Residues histidine 562, histidine 566, cysteine 664, and histidine 668 each contribute to the Zn(2+) site.

This sequence belongs to the class-II aminoacyl-tRNA synthetase family. Zn(2+) is required as a cofactor.

Its subcellular location is the cytoplasm. The catalysed reaction is tRNA(Ala) + L-alanine + ATP = L-alanyl-tRNA(Ala) + AMP + diphosphate. In terms of biological role, catalyzes the attachment of alanine to tRNA(Ala) in a two-step reaction: alanine is first activated by ATP to form Ala-AMP and then transferred to the acceptor end of tRNA(Ala). Also edits incorrectly charged Ser-tRNA(Ala) and Gly-tRNA(Ala) via its editing domain. This is Alanine--tRNA ligase from Neisseria meningitidis serogroup C / serotype 2a (strain ATCC 700532 / DSM 15464 / FAM18).